We begin with the raw amino-acid sequence, 240 residues long: Ribosome maturation protein SDO1 homolog (240 aa).

Belongs to the SDO1/SBDS family.

This is Ribosome maturation protein SDO1 homolog from Methanocaldococcus jannaschii (strain ATCC 43067 / DSM 2661 / JAL-1 / JCM 10045 / NBRC 100440) (Methanococcus jannaschii).